A 99-amino-acid chain; its full sequence is Endothelin receptor type B (99 aa).

Residues 1-8 (PFGAEMCK) are Extracellular-facing. An intrachain disulfide couples Cys-7 to Cys-88. Residues 9 to 30 (LVPFIQKASVGITVLSLCALSI) traverse the membrane as a helical segment. At 31-51 (DRYRAVASWSRIKGIGIPKWT) the chain is on the cytoplasmic side. The helical transmembrane segment at 52–76 (AVEIVLIWVVSVVLAVPEAIGFDMI) threads the bilayer. Over 77–99 (TMDYKGSYLRICLLHPVQKTAFM) the chain is Extracellular.

The protein belongs to the G-protein coupled receptor 1 family. Endothelin receptor subfamily. EDNRB sub-subfamily.

The protein localises to the cell membrane. Non-specific receptor for endothelin 1, 2, and 3. Mediates its action by association with G proteins that activate a phosphatidylinositol-calcium second messenger system. The polypeptide is Endothelin receptor type B (EDNRB) (Macaca fascicularis (Crab-eating macaque)).